The following is a 175-amino-acid chain: FOXL2 neighbor protein (175 aa).

Disordered regions lie at residues 1 to 39 (MTRT…PALV) and 70 to 100 (AQKT…GKRR).

This chain is FOXL2 neighbor protein (FOXL2NB), found in Homo sapiens (Human).